We begin with the raw amino-acid sequence, 460 residues long: Methylenetetrahydrofolate--tRNA-(uracil-5-)-methyltransferase TrmFO (460 aa).

Residue 15 to 20 participates in FAD binding; the sequence is GAGLAG.

Belongs to the MnmG family. TrmFO subfamily. Requires FAD as cofactor.

The protein resides in the cytoplasm. It catalyses the reaction uridine(54) in tRNA + (6R)-5,10-methylene-5,6,7,8-tetrahydrofolate + NADH + H(+) = 5-methyluridine(54) in tRNA + (6S)-5,6,7,8-tetrahydrofolate + NAD(+). It carries out the reaction uridine(54) in tRNA + (6R)-5,10-methylene-5,6,7,8-tetrahydrofolate + NADPH + H(+) = 5-methyluridine(54) in tRNA + (6S)-5,6,7,8-tetrahydrofolate + NADP(+). Its function is as follows. Catalyzes the folate-dependent formation of 5-methyl-uridine at position 54 (M-5-U54) in all tRNAs. In Synechococcus sp. (strain CC9902), this protein is Methylenetetrahydrofolate--tRNA-(uracil-5-)-methyltransferase TrmFO.